Reading from the N-terminus, the 124-residue chain is 14 kDa peptide of ubiquinol-cytochrome c2 oxidoreductase complex (124 aa).

The chain crosses the membrane as a helical span at residues 85–102 (LGGFASGALLALALAGIF).

The protein localises to the cell inner membrane. In terms of biological role, component of the ubiquinol-cytochrome c reductase complex (complex III or cytochrome b-c1 complex), which is a respiratory chain that generates an electrochemical potential coupled to ATP synthesis. The sequence is that of 14 kDa peptide of ubiquinol-cytochrome c2 oxidoreductase complex from Cereibacter sphaeroides (Rhodobacter sphaeroides).